The sequence spans 371 residues: Prephenate dehydrogenase (371 aa).

The region spanning 6-295 is the Prephenate/arogenate dehydrogenase domain; sequence DTILLAGLGL…GLPLRQKGAI (290 aa). 7 to 37 is an NAD(+) binding site; that stretch reads TILLAGLGLIGGSIALAIKKNHPGKRIIGID. In terms of domain architecture, ACT spans 300-371; that stretch reads DLYVDVPDHP…RAEYETFYAD (72 aa).

It belongs to the prephenate/arogenate dehydrogenase family.

It carries out the reaction prephenate + NAD(+) = 3-(4-hydroxyphenyl)pyruvate + CO2 + NADH. The protein operates within amino-acid biosynthesis; L-tyrosine biosynthesis; (4-hydroxyphenyl)pyruvate from prephenate (NAD(+) route): step 1/1. This Bacillus subtilis (strain 168) protein is Prephenate dehydrogenase (tyrA).